The sequence spans 271 residues: PH domain-containing protein ECU06_0670 (271 aa).

The interval 26–145 is disordered; that stretch reads AKKTLDSSES…EKKNDAFIPP (120 aa). 3 stretches are compositionally biased toward basic and acidic residues: residues 42–64, 92–120, and 128–140; these read EVGE…EPAM, QPEK…LLDK, and EENA…KKND. The region spanning 166-267 is the PH domain; it reads NTVVEGWMWK…WVEKLNETIR (102 aa).

In Encephalitozoon cuniculi (strain GB-M1) (Microsporidian parasite), this protein is PH domain-containing protein ECU06_0670.